We begin with the raw amino-acid sequence, 207 residues long: Interferon kappa (207 aa).

A signal peptide spans 1-27; it reads MSTKPDMIQKCLWLEILMGIFIAGTLS. Intrachain disulfides connect cysteine 30–cysteine 128 and cysteine 59–cysteine 181. Residues 118–148 adopt a coiled-coil conformation; the sequence is LDQQAEYLNQCLEEDKNENEDMKEMKENEMK.

This sequence belongs to the alpha/beta interferon family. In terms of tissue distribution, expressed in keratinocytes, monocytes and in resting dendritic cells.

It localises to the secreted. May play a role in the regulation of immune cell function. Cytokine that imparts cellular protection against viral infection in a species-specific manner. Activates the interferon-stimulated response element signaling pathway. It is able to directly modulate cytokine release from monocytes and dendritic cells. Binds heparin. The polypeptide is Interferon kappa (IFNK) (Homo sapiens (Human)).